The primary structure comprises 659 residues: Mannosyl-oligosaccharide 1,2-alpha-mannosidase IA (659 aa).

Residues 1–48 (MPVGGLLPLFSSPAGGGLGGGLGGGLGGGGGGGGRKGSGPSAFRLTEK) lie on the Cytoplasmic side of the membrane. The helical; Signal-anchor for type II membrane protein transmembrane segment at 49-69 (FVLLLVFSAFITLCFGAIFFL) threads the bilayer. Residues 70–659 (PDSSKLLSGV…NIKKVEDNEK (590 aa)) lie on the Lumenal side of the membrane. The interval 88–121 (QPAADHKPGPGARAEDAADGRARPGEEGAPGDPA) is disordered. Over residues 91 to 113 (ADHKPGPGARAEDAADGRARPGE) the composition is skewed to basic and acidic residues. Residues cysteine 482 and cysteine 514 are joined by a disulfide bond. Glutamate 528 acts as the Proton donor in catalysis. Threonine 639 serves as a coordination point for Ca(2+).

It belongs to the glycosyl hydrolase 47 family. It depends on Ca(2+) as a cofactor.

The protein localises to the endoplasmic reticulum membrane. The enzyme catalyses N(4)-(alpha-D-Man-(1-&gt;2)-alpha-D-Man-(1-&gt;2)-alpha-D-Man-(1-&gt;3)-[alpha-D-Man-(1-&gt;2)-alpha-D-Man-(1-&gt;3)-[alpha-D-Man-(1-&gt;2)-alpha-D-Man-(1-&gt;6)]-alpha-D-Man-(1-&gt;6)]-beta-D-Man-(1-&gt;4)-beta-D-GlcNAc-(1-&gt;4)-beta-D-GlcNAc)-L-asparaginyl-[protein] (N-glucan mannose isomer 9A1,2,3B1,2,3) + 4 H2O = N(4)-(alpha-D-Man-(1-&gt;3)-[alpha-D-Man-(1-&gt;3)-[alpha-D-Man-(1-&gt;6)]-alpha-D-Man-(1-&gt;6)]-beta-D-Man-(1-&gt;4)-beta-D-GlcNAc-(1-&gt;4)-beta-D-GlcNAc)-L-asparaginyl-[protein] (N-glucan mannose isomer 5A1,2) + 4 beta-D-mannose. The catalysed reaction is N(4)-(alpha-D-Man-(1-&gt;2)-alpha-D-Man-(1-&gt;2)-alpha-D-Man-(1-&gt;3)-[alpha-D-Man-(1-&gt;3)-[alpha-D-Man-(1-&gt;2)-alpha-D-Man-(1-&gt;6)]-alpha-D-Man-(1-&gt;6)]-beta-D-Man-(1-&gt;4)-beta-D-GlcNAc-(1-&gt;4)-beta-D-GlcNAc)-L-asparaginyl-[protein] (N-glucan mannose isomer 8A1,2,3B1,3) + 3 H2O = N(4)-(alpha-D-Man-(1-&gt;3)-[alpha-D-Man-(1-&gt;3)-[alpha-D-Man-(1-&gt;6)]-alpha-D-Man-(1-&gt;6)]-beta-D-Man-(1-&gt;4)-beta-D-GlcNAc-(1-&gt;4)-beta-D-GlcNAc)-L-asparaginyl-[protein] (N-glucan mannose isomer 5A1,2) + 3 beta-D-mannose. It participates in protein modification; protein glycosylation. Inhibited by both 1-deoxymannojirimycin and kifunensine. Involved in the maturation of Asn-linked oligosaccharides. Progressively trim alpha-1,2-linked mannose residues from Man(9)GlcNAc(2) to produce Man(5)GlcNAc(2). The chain is Mannosyl-oligosaccharide 1,2-alpha-mannosidase IA (MAN1A1) from Sus scrofa (Pig).